We begin with the raw amino-acid sequence, 318 residues long: Aspartate carbamoyltransferase catalytic subunit (318 aa).

Arg-62 and Thr-63 together coordinate carbamoyl phosphate. Lys-90 provides a ligand contact to L-aspartate. Residues Arg-112, His-140, and Gln-143 each coordinate carbamoyl phosphate. Positions 173 and 227 each coordinate L-aspartate. Carbamoyl phosphate is bound by residues Gly-268 and Pro-269.

Belongs to the aspartate/ornithine carbamoyltransferase superfamily. ATCase family. Heterododecamer (2C3:3R2) of six catalytic PyrB chains organized as two trimers (C3), and six regulatory PyrI chains organized as three dimers (R2).

The enzyme catalyses carbamoyl phosphate + L-aspartate = N-carbamoyl-L-aspartate + phosphate + H(+). It participates in pyrimidine metabolism; UMP biosynthesis via de novo pathway; (S)-dihydroorotate from bicarbonate: step 2/3. Functionally, catalyzes the condensation of carbamoyl phosphate and aspartate to form carbamoyl aspartate and inorganic phosphate, the committed step in the de novo pyrimidine nucleotide biosynthesis pathway. The polypeptide is Aspartate carbamoyltransferase catalytic subunit (Desulfotalea psychrophila (strain LSv54 / DSM 12343)).